The following is a 327-amino-acid chain: Transaldolase (327 aa).

Lysine 132 acts as the Schiff-base intermediate with substrate in catalysis.

It belongs to the transaldolase family. Type 1 subfamily. As to quaternary structure, homodimer.

It localises to the cytoplasm. The enzyme catalyses D-sedoheptulose 7-phosphate + D-glyceraldehyde 3-phosphate = D-erythrose 4-phosphate + beta-D-fructose 6-phosphate. It functions in the pathway carbohydrate degradation; pentose phosphate pathway; D-glyceraldehyde 3-phosphate and beta-D-fructose 6-phosphate from D-ribose 5-phosphate and D-xylulose 5-phosphate (non-oxidative stage): step 2/3. Transaldolase is important for the balance of metabolites in the pentose-phosphate pathway. In Chlamydia felis (strain Fe/C-56) (Chlamydophila felis), this protein is Transaldolase.